The primary structure comprises 66 residues: Large ribosomal subunit protein bL35 (66 aa).

The span at 1–16 (MPKMKTHKGSAKRFKK) shows a compositional bias: basic residues. Positions 1–24 (MPKMKTHKGSAKRFKKTGTGQLKR) are disordered.

It belongs to the bacterial ribosomal protein bL35 family.

This is Large ribosomal subunit protein bL35 from Anoxybacillus flavithermus (strain DSM 21510 / WK1).